The chain runs to 72 residues: Threonine dehydratase operon activator protein (72 aa).

Functionally, probable trans-acting positive activator for the tdc operon. The protein is Threonine dehydratase operon activator protein (tdcR) of Escherichia coli (strain K12).